Consider the following 916-residue polypeptide: DNA repair endonuclease XPF (916 aa).

Residues 1–457 form a helicase-like region; that stretch reads MESGQPARRI…EVWMKFRKED (457 aa). 2 leucine-zipper regions span residues 233-254 and 270-298; these read LNAC…DLSL and LDPL…LQYL. Position 289 is an N6-acetyllysine (Lys-289). The disordered stretch occupies residues 460–487; it reads KRIRKSHKRPKDPQNKERASTKERTLKK. The segment covering 470–483 has biased composition (basic and acidic residues); that stretch reads KDPQNKERASTKER. The Nuclear localization signal signature appears at 486-491; sequence KKKKRK. Lys-500 is covalently cross-linked (Glycyl lysine isopeptide (Lys-Gly) (interchain with G-Cter in SUMO2)). Disordered regions lie at residues 502-526 and 660-679; these read EELE…ESCP and TASA…EQNG. A Phosphoserine modification is found at Ser-521. Positions 658–813 are nuclease; the sequence is RGTASADVST…PSPHATAELF (156 aa). The 81-residue stretch at 683–763 folds into the ERCC4 domain; the sequence is SIVVDMREFR…RPVLLIEFDP (81 aa). A Phosphoserine modification is found at Ser-764. The tract at residues 837-905 is hhH2, dimerization with ERCC1; that stretch reads TLPESEKYNP…QLYDFIHTSF (69 aa). Lys-911 carries the post-translational modification N6-acetyllysine.

This sequence belongs to the XPF family. As to quaternary structure, heterodimer composed of ERCC1 and ERCC4/XPF. Interacts with SLX4/BTBD12; this interaction is direct and links the ERCC1-ERCC4/XPF complex to SLX4, which may coordinate the action of the structure-specific endonuclease during DNA repair. The cofactor is Mg(2+). Acetylation at Lys-911 by KAT5 promotes interaction with ERCC1 by disrupting a salt bridge between Glu-907 and Lys-911, thereby exposing a second binding site for ERCC1. Deacetylated by SIRT1.

Its subcellular location is the nucleus. The protein localises to the chromosome. Functionally, catalytic component of a structure-specific DNA repair endonuclease responsible for the 5-prime incision during DNA repair, and which is essential for nucleotide excision repair (NER) and interstrand cross-link (ICL) repair. The chain is DNA repair endonuclease XPF from Homo sapiens (Human).